Here is a 181-residue protein sequence, read N- to C-terminus: GMP synthase [glutamine-hydrolyzing] subunit A (181 aa).

The Glutamine amidotransferase type-1 domain occupies 2–181 (KILVVNNYGQ…FDNFLEICRR (180 aa)). Residue Cys72 is the Nucleophile of the active site. Active-site residues include His159 and Glu161.

Heterodimer composed of a glutamine amidotransferase subunit (A) and a GMP-binding subunit (B).

It carries out the reaction XMP + L-glutamine + ATP + H2O = GMP + L-glutamate + AMP + diphosphate + 2 H(+). The protein operates within purine metabolism; GMP biosynthesis; GMP from XMP (L-Gln route): step 1/1. Its function is as follows. Catalyzes the synthesis of GMP from XMP. This Methanothrix thermoacetophila (strain DSM 6194 / JCM 14653 / NBRC 101360 / PT) (Methanosaeta thermophila) protein is GMP synthase [glutamine-hydrolyzing] subunit A.